A 472-amino-acid polypeptide reads, in one-letter code: Probable sterol O-acyltransferase 2 (472 aa).

Serine 12 bears the Phosphoserine mark. Helical transmembrane passes span 61 to 81 (FTGF…MSFL), 111 to 131 (LAMS…ALGY), and 135 to 155 (YGLG…HCVL). An N-linked (GlcNAc...) asparagine glycan is attached at asparagine 161. A helical transmembrane segment spans residues 170 to 190 (FILHSMVILMKLHSYNVVNGW). A glycan (N-linked (GlcNAc...) asparagine) is linked at asparagine 233. 2 helical membrane passes run 262 to 282 (IHYL…LVII) and 317 to 337 (TVAF…WVIF). A glycan (N-linked (GlcNAc...) asparagine) is linked at asparagine 342. An FYXDWWN motif motif is present at residues 355 to 361 (FYDDWWN). Residue histidine 409 is part of the active site. A helical transmembrane segment spans residues 452-472 (IAFWFSIIIGIALIAALYILF).

The protein belongs to the membrane-bound acyltransferase family. Sterol o-acyltransferase subfamily.

It is found in the endoplasmic reticulum membrane. Sterol O-acyltransferase that catalyzes the formation of stery esters. This chain is Probable sterol O-acyltransferase 2 (are2), found in Schizosaccharomyces pombe (strain 972 / ATCC 24843) (Fission yeast).